The sequence spans 317 residues: 2-oxoglutarate and iron-dependent oxygenase domain-containing protein 3 (317 aa).

The interval 1–34 (MATRHRRRGGSAPSWAKPGKPGERPGGPKKSRGR) is disordered. The Cytoplasmic portion of the chain corresponds to 1-39 (MATRHRRRGGSAPSWAKPGKPGERPGGPKKSRGRTSWKS). The chain crosses the membrane as a helical; Signal-anchor for type II membrane protein span at residues 40-60 (LLIWGVFGVTLGLMAGYYLWG). Over 61 to 317 (ELITDDSVTE…EHAIGDPTWT (257 aa)) the chain is Lumenal. 2 N-linked (GlcNAc...) asparagine glycosylation sites follow: Asn195 and Asn213. A Fe2OG dioxygenase domain is found at 205-307 (KPTFFSRMNS…AITISFTCNP (103 aa)). 2 residues coordinate Fe cation: His228 and Asp230. Asn265 is a glycosylation site (N-linked (GlcNAc...) asparagine). His286 provides a ligand contact to Fe cation. Residue Arg296 is part of the active site. Arg296 is a 2-oxoglutarate binding site.

It belongs to the OGFOD3 family. It depends on Fe(2+) as a cofactor. L-ascorbate serves as cofactor.

Its subcellular location is the membrane. In Xenopus tropicalis (Western clawed frog), this protein is 2-oxoglutarate and iron-dependent oxygenase domain-containing protein 3 (ogfod3).